Consider the following 254-residue polypeptide: Alcohol dehydrogenase 2 (254 aa).

NAD(+) is bound at residue 10–33 (FVAGLGGIGFDTSREIVKSGPKNL). Residue serine 138 participates in substrate binding. Tyrosine 151 acts as the Proton acceptor in catalysis.

Belongs to the short-chain dehydrogenases/reductases (SDR) family. Homodimer.

It catalyses the reaction a primary alcohol + NAD(+) = an aldehyde + NADH + H(+). The enzyme catalyses a secondary alcohol + NAD(+) = a ketone + NADH + H(+). The polypeptide is Alcohol dehydrogenase 2 (Adh2) (Drosophila mulleri (Fruit fly)).